The chain runs to 368 residues: Protein-glutamate methylesterase/protein-glutamine glutaminase 2 (368 aa).

The Response regulatory domain maps to Lys6–Glu123. 4-aspartylphosphate is present on Asp57. In terms of domain architecture, CheB-type methylesterase spans Ile169–Leu355. Catalysis depends on residues Ser181, His207, and Asp303.

This sequence belongs to the CheB family. Phosphorylated by CheA. Phosphorylation of the N-terminal regulatory domain activates the methylesterase activity.

It localises to the cytoplasm. It catalyses the reaction [protein]-L-glutamate 5-O-methyl ester + H2O = L-glutamyl-[protein] + methanol + H(+). The enzyme catalyses L-glutaminyl-[protein] + H2O = L-glutamyl-[protein] + NH4(+). Its function is as follows. Involved in chemotaxis. Part of a chemotaxis signal transduction system that modulates chemotaxis in response to various stimuli. Catalyzes the demethylation of specific methylglutamate residues introduced into the chemoreceptors (methyl-accepting chemotaxis proteins or MCP) by CheR. Also mediates the irreversible deamidation of specific glutamine residues to glutamic acid. The polypeptide is Protein-glutamate methylesterase/protein-glutamine glutaminase 2 (Hahella chejuensis (strain KCTC 2396)).